A 498-amino-acid chain; its full sequence is ATP synthase subunit beta, chloroplastic (498 aa).

ATP is bound at residue 172 to 179 (GGAGVGKT).

It belongs to the ATPase alpha/beta chains family. As to quaternary structure, F-type ATPases have 2 components, CF(1) - the catalytic core - and CF(0) - the membrane proton channel. CF(1) has five subunits: alpha(3), beta(3), gamma(1), delta(1), epsilon(1). CF(0) has four main subunits: a(1), b(1), b'(1) and c(9-12).

It localises to the plastid. It is found in the chloroplast thylakoid membrane. It carries out the reaction ATP + H2O + 4 H(+)(in) = ADP + phosphate + 5 H(+)(out). Its function is as follows. Produces ATP from ADP in the presence of a proton gradient across the membrane. The catalytic sites are hosted primarily by the beta subunits. The sequence is that of ATP synthase subunit beta, chloroplastic from Helianthus annuus (Common sunflower).